The following is a 255-amino-acid chain: 5'-nucleotidase SurE (255 aa).

The a divalent metal cation site is built by aspartate 8, aspartate 9, serine 40, and asparagine 92.

This sequence belongs to the SurE nucleotidase family. A divalent metal cation is required as a cofactor.

The protein resides in the cytoplasm. It carries out the reaction a ribonucleoside 5'-phosphate + H2O = a ribonucleoside + phosphate. In terms of biological role, nucleotidase that shows phosphatase activity on nucleoside 5'-monophosphates. This Brucella canis (strain ATCC 23365 / NCTC 10854 / RM-666) protein is 5'-nucleotidase SurE.